Reading from the N-terminus, the 473-residue chain is Photosystem II CP43 reaction center protein (473 aa).

Residues 1–14 constitute a propeptide that is removed on maturation; it reads MKTLYSLRRFSHVE. N-acetylthreonine is present on threonine 15. Phosphothreonine is present on threonine 15. Helical transmembrane passes span 69–93, 134–155, 178–200, 255–275, and 291–312; these read LFEVAHFGPEKPMYEQGLILLPHLA, LLGPEIIEESFPLFRYVWKDRN, KALYFGGVYDTWAPGGGDVRKIT, KPFAWARRALVWSGEAYLSYS, and WFNNTAYPSEFYGPTGPEASQA. Residue glutamate 367 coordinates [CaMn4O5] cluster. The chain crosses the membrane as a helical span at residues 447-471; sequence RARAAAAGFEKGIDRDFEPVLSMTP.

Belongs to the PsbB/PsbC family. PsbC subfamily. As to quaternary structure, PSII is composed of 1 copy each of membrane proteins PsbA, PsbB, PsbC, PsbD, PsbE, PsbF, PsbH, PsbI, PsbJ, PsbK, PsbL, PsbM, PsbT, PsbX, PsbY, PsbZ, Psb30/Ycf12, at least 3 peripheral proteins of the oxygen-evolving complex and a large number of cofactors. It forms dimeric complexes. The cofactor is Binds multiple chlorophylls and provides some of the ligands for the Ca-4Mn-5O cluster of the oxygen-evolving complex. It may also provide a ligand for a Cl- that is required for oxygen evolution. PSII binds additional chlorophylls, carotenoids and specific lipids..

It localises to the plastid membrane. In terms of biological role, one of the components of the core complex of photosystem II (PSII). It binds chlorophyll and helps catalyze the primary light-induced photochemical processes of PSII. PSII is a light-driven water:plastoquinone oxidoreductase, using light energy to abstract electrons from H(2)O, generating O(2) and a proton gradient subsequently used for ATP formation. The protein is Photosystem II CP43 reaction center protein of Cuscuta obtusiflora (Peruvian dodder).